Here is a 60-residue protein sequence, read N- to C-terminus: uncharacterized protein (60 aa).

This is an uncharacterized protein from Treponema pallidum (strain Nichols).